Consider the following 283-residue polypeptide: Short-chain dehydrogenase anuB (283 aa).

NADP(+) contacts are provided by T57, D78, N106, Y166, K170, V199, and T201. Y166 serves as the catalytic Proton acceptor. Y166 serves as the catalytic Proton donor. The active-site Lowers pKa of active site Tyr is K170.

It belongs to the short-chain dehydrogenases/reductases (SDR) family.

It functions in the pathway secondary metabolite biosynthesis. Functionally, highly reducing polyketide synthase; part of the gene cluster that mediates the biosynthesis of annullatin D, an alkylated aromatic polyketide with a fused dihydrobenzofuran lactone ring system that exhibits potent agonistic activities toward the cannabinoid receptors. The annullatin backbone 2-hydroxymethyl-3-pentylphenol is assembled from one acetyl-CoA starter unit and 5 malonyl-CoA elongation units by cooperation of the highly reducing polyketide synthase anuA, the short-chain dehydrogenase anuB and the oxidoreductase anuC, before being hydroxylated at the C-5 alkyl chain by the cytochrome P450 monooxygenase anuE to form (8S)-annullatin E. The prenyltransferase anuH subsequently installs one isoprenyl group at the benzene ring to form (8S)-annullatin J. Enzymatic or nonenzymatic dihydro-benzofuran ring formation between the prenyl and the phenolic hydroxyl groups in (8S)-annullatin J results in two diastereomers (2S,9S)-annullatin H and compound 12. The intermediate (2S,9S)-annullatin H is then converted to (2S,9S)-annullatin D by the FAD-linked oxidoreductase anuG-catalyzed five-member lactone ring formation. The isomer 12 acts as a substrate for the short-chain dehydrogenase anuF and is oxidized to (2R)-annullatin F, which is subsequently acetylated by an acetyltransferase leading to (2R)-annullatin G formation. The remaining enzymes identified within the cluster, anuD, anuI and anuJ, seem not to be involved in annullatin biosynthesis. The sequence is that of Short-chain dehydrogenase anuB from Penicillium roqueforti (strain FM164).